Consider the following 466-residue polypeptide: UDP-N-acetylmuramoylalanine--D-glutamate ligase (466 aa).

128–134 (GTNGKST) contributes to the ATP binding site.

This sequence belongs to the MurCDEF family.

The protein resides in the cytoplasm. The catalysed reaction is UDP-N-acetyl-alpha-D-muramoyl-L-alanine + D-glutamate + ATP = UDP-N-acetyl-alpha-D-muramoyl-L-alanyl-D-glutamate + ADP + phosphate + H(+). The protein operates within cell wall biogenesis; peptidoglycan biosynthesis. In terms of biological role, cell wall formation. Catalyzes the addition of glutamate to the nucleotide precursor UDP-N-acetylmuramoyl-L-alanine (UMA). In Bartonella henselae (strain ATCC 49882 / DSM 28221 / CCUG 30454 / Houston 1) (Rochalimaea henselae), this protein is UDP-N-acetylmuramoylalanine--D-glutamate ligase.